The primary structure comprises 1165 residues: Autophagy-related protein 11 (1165 aa).

Coiled-coil stretches lie at residues 239–304 (NKLN…YKNM) and 670–853 (DNIR…KQKK).

It belongs to the ATG11 family. In terms of assembly, homodimer and potential homooligomers.

It is found in the preautophagosomal structure membrane. Its function is as follows. Plays an essential role in both non-selective and selective autophagy such as mitophagy. Recruits mitochondria for their selective degradation via autophagy (mitophagy) during starvation, through its interaction with ATG32. Works as scaffold proteins that recruit ATG proteins to the pre-autophagosome (PAS), the site of vesicle/autophagosome formation. Required for ATG9 anterograde transport from the mitochondria to the PAS. In Candida albicans (strain SC5314 / ATCC MYA-2876) (Yeast), this protein is Autophagy-related protein 11.